Here is a 346-residue protein sequence, read N- to C-terminus: N-acetyl-gamma-glutamyl-phosphate reductase (346 aa).

Residue cysteine 149 is part of the active site.

It belongs to the NAGSA dehydrogenase family. Type 1 subfamily.

It localises to the cytoplasm. The catalysed reaction is N-acetyl-L-glutamate 5-semialdehyde + phosphate + NADP(+) = N-acetyl-L-glutamyl 5-phosphate + NADPH + H(+). The protein operates within amino-acid biosynthesis; L-arginine biosynthesis; N(2)-acetyl-L-ornithine from L-glutamate: step 3/4. In terms of biological role, catalyzes the NADPH-dependent reduction of N-acetyl-5-glutamyl phosphate to yield N-acetyl-L-glutamate 5-semialdehyde. This Micrococcus luteus (strain ATCC 4698 / DSM 20030 / JCM 1464 / CCM 169 / CCUG 5858 / IAM 1056 / NBRC 3333 / NCIMB 9278 / NCTC 2665 / VKM Ac-2230) (Micrococcus lysodeikticus) protein is N-acetyl-gamma-glutamyl-phosphate reductase.